The sequence spans 457 residues: Pancreatic triacylglycerol lipase (457 aa).

An N-terminal signal peptide occupies residues 1-7 (LLLGAVA). 2 disulfides stabilise this stretch: Cys-12–Cys-18 and Cys-99–Cys-110. Catalysis depends on Ser-161, which acts as the Nucleophile. Residue Asp-185 is the Charge relay system of the active site. 4 residues coordinate Ca(2+): Glu-196, Arg-199, Asp-201, and Asp-204. Cys-246 and Cys-270 are oxidised to a cystine. His-272 functions as the Charge relay system in the catalytic mechanism. Intrachain disulfides connect Cys-294–Cys-305 and Cys-308–Cys-313. An N-linked (GlcNAc...) asparagine glycan is attached at Asn-343. The 111-residue stretch at 347 to 457 (WRYQIAVTLS…EDILLTLTPC (111 aa)) folds into the PLAT domain. The cysteines at positions 441 and 457 are disulfide-linked.

It belongs to the AB hydrolase superfamily. Lipase family. As to quaternary structure, forms a 1:1 stoichiometric complex with (pro)colipase/CLPS.

The protein localises to the secreted. The enzyme catalyses a triacylglycerol + H2O = a diacylglycerol + a fatty acid + H(+). The catalysed reaction is 1,2,3-tributanoylglycerol + H2O = dibutanoylglycerol + butanoate + H(+). It carries out the reaction 1,2,3-tri-(9Z-octadecenoyl)-glycerol + H2O = di-(9Z)-octadecenoylglycerol + (9Z)-octadecenoate + H(+). It catalyses the reaction all-trans-retinyl hexadecanoate + H2O = all-trans-retinol + hexadecanoate + H(+). The enzyme catalyses 1,2-di-(9Z-octadecenoyl)-glycerol + H2O = (9Z-octadecenoyl)-glycerol + (9Z)-octadecenoate + H(+). With respect to regulation, inhibited by bile salts, is reactivated by (pro)colipase/CLPS. Functionally, plays an important role in fat metabolism. It preferentially splits the esters of long-chain fatty acids at positions 1 and 3, producing mainly 2-monoacylglycerol and free fatty acids, and shows considerably higher activity against insoluble emulsified substrates than against soluble ones. The chain is Pancreatic triacylglycerol lipase (PNLIP) from Myocastor coypus (Coypu).